The following is a 76-amino-acid chain: MCVMDTRERALIRQSGLPEIILSAKYPVCVRTESGKFIDSNSVFLHLIKCQNSNSEIWFSGIDIDTQILFHTVEVD.

Its subcellular location is the cytoplasm. This protein is essential for positively regulating the expression of transfer genes that are involved in the conjugal transfer of DNA between bacterial cells. The sequence is that of Protein TraJ (traJ) from Escherichia coli.